A 133-amino-acid chain; its full sequence is ATP synthase epsilon chain (133 aa).

Belongs to the ATPase epsilon chain family. F-type ATPases have 2 components, CF(1) - the catalytic core - and CF(0) - the membrane proton channel. CF(1) has five subunits: alpha(3), beta(3), gamma(1), delta(1), epsilon(1). CF(0) has three main subunits: a, b and c.

It is found in the cell membrane. Its function is as follows. Produces ATP from ADP in the presence of a proton gradient across the membrane. This Clostridium botulinum (strain ATCC 19397 / Type A) protein is ATP synthase epsilon chain.